The following is a 351-amino-acid chain: AA9 family lytic polysaccharide monooxygenase A (351 aa).

A signal peptide spans 1–20; sequence MSNKAATLLAALSGAALVAA. Cu(2+) contacts are provided by His21 and His107. A disulfide bond links Cys76 and Cys196. Positions 182 and 191 each coordinate O2. Tyr193 contacts Cu(2+). The region spanning 315–351 is the CBM1 domain; that stretch reads GVAPKWGQCGGNGWTGPTVCASGSTCTVLNPYYSQCI.

This sequence belongs to the polysaccharide monooxygenase AA9 family. Cu(2+) is required as a cofactor.

It is found in the secreted. It carries out the reaction [(1-&gt;4)-beta-D-glucosyl]n+m + reduced acceptor + O2 = 4-dehydro-beta-D-glucosyl-[(1-&gt;4)-beta-D-glucosyl]n-1 + [(1-&gt;4)-beta-D-glucosyl]m + acceptor + H2O.. In terms of biological role, lytic polysaccharide monooxygenase (LPMO) that depolymerizes crystalline and amorphous polysaccharides via the oxidation of scissile alpha- or beta-(1-4)-glycosidic bonds, yielding C1 and C4 oxidation products. Catalysis by LPMOs requires the reduction of the active-site copper from Cu(II) to Cu(I) by a reducing agent and H(2)O(2) or O(2) as a cosubstrate. The sequence is that of AA9 family lytic polysaccharide monooxygenase A from Podospora anserina (strain S / ATCC MYA-4624 / DSM 980 / FGSC 10383) (Pleurage anserina).